The chain runs to 1214 residues: Genome polyprotein (1214 aa).

In terms of domain architecture, SF3 helicase spans 1–55 (NKGKTFTSKYVIMTSNTETPVKPTSRRAGAFYRRVMIVDVTNNAVEKWKSDNPGK). The residue at position 428 (Y428) is an O-(5'-phospho-RNA)-tyrosine. In terms of domain architecture, Peptidase C24 spans 523–676 (GVAHKNAIVS…KLIVPYAKVD (154 aa)). Active-site for 3CLpro activity residues include H557, E578, and C640. Residues 926-1051 (HDRYCVDYSK…IVPPLISSVM (126 aa)) enclose the RdRp catalytic domain.

Post-translationally, specific enzymatic cleavages in vivo yield mature proteins. Pro-Pol is first autocatalytically cleaved, then processes the whole polyprotein. VPg is uridylylated by the polymerase and is covalently attached to the 5'-end of the polyadenylated genomic and subgenomic RNAs. This uridylylated form acts as a nucleotide-peptide primer for the polymerase.

It carries out the reaction a ribonucleoside 5'-triphosphate + H2O = a ribonucleoside 5'-diphosphate + phosphate + H(+). The enzyme catalyses RNA(n) + a ribonucleoside 5'-triphosphate = RNA(n+1) + diphosphate. It catalyses the reaction Endopeptidase with a preference for cleavage when the P1 position is occupied by Glu-|-Xaa and the P1' position is occupied by Gly-|-Yaa.. In terms of biological role, NTPase presumably plays a role in replication. Despite having similarities with helicases, does not seem to display any helicase activity. Functionally, viral genome-linked protein is covalently linked to the 5'-end of the positive-strand, negative-strand genomic RNAs and subgenomic RNA. Acts as a genome-linked replication primer. May recruit ribosome to viral RNA thereby promoting viral proteins translation. Protease-polymerase p76 processes the polyprotein: Pro-Pol is first released by autocleavage, then all other proteins are cleaved. Cleaves host translation initiation factor eIF4G1 and eIF4G2 thereby inducing a shutdown of host protein synthesis. This shutdown may not prevent viral mRNA from being translated since viral Vpg replaces the cap. May cleave host polyadenylate-binding protein thereby inhibiting cellular translation. It is also an RNA-directed RNA polymerase which replicates genomic and antigenomic viral RNA by recognizing specific signals. Also transcribes a subgenomic mRNA by initiating RNA synthesis internally on antigenomic RNA. This sgRNA codes for structural proteins. Catalyzes the covalent attachment VPg with viral RNAs. This chain is Genome polyprotein, found in San Miguel sea lion virus serotype 4 (SMSV-4).